A 250-amino-acid chain; its full sequence is CCN family member 5 (250 aa).

The N-terminal stretch at 1-23 (MRGSPLIRLLATSFLCLLSMVCA) is a signal peptide. 6 disulfides stabilise this stretch: C22–C50, C26–C52, C32–C53, C39–C56, C64–C78, and C70–C100. Residues 24–103 (QLCRTPCTCP…DEDDGDCEVN (80 aa)) form the IGFBP N-terminal domain. Residues 98-164 (GDCEVNGRRY…GKCCPEWVCD (67 aa)) form the VWFC domain. In terms of domain architecture, TSP type-1 spans 194-238 (WPNWSTAWGPCSTTCGLGIATRVSNQNRFCQLEIQRRLCLPRPCL). N196 is a glycosylation site (N-linked (GlcNAc...) asparagine).

Belongs to the CCN family.

It localises to the secreted. In terms of biological role, may play an important role in modulating bone turnover. Promotes the adhesion of osteoblast cells and inhibits the binding of fibrinogen to integrin receptors. In addition, inhibits osteocalcin production. This chain is CCN family member 5 (Ccn5), found in Rattus norvegicus (Rat).